We begin with the raw amino-acid sequence, 74 residues long: MKTATVFVLVALIFMTMTTAWALSNPKEKPGACPKPPPRSFGTCDERCTGDGSCSGNMKCCSNGCGHACKPPVF.

The signal sequence occupies residues Met1–Ser24. The WAP domain occupies Pro26–Val73.

Its subcellular location is the secreted. Functionally, could have proteinase inhibiting capacity. The protein is WAP four-disulfide core domain protein 18 (WFDC18) of Bos taurus (Bovine).